An 86-amino-acid polypeptide reads, in one-letter code: MATKKAGGSSRNGRDSAGRRLGVKKADGQYVIPGNIIVRQRGTKIHPGVNVGIGKDHTIFALTSGRVEFLTKRDHKIVNVTEIASA.

Positions 1–22 (MATKKAGGSSRNGRDSAGRRLG) are disordered.

The protein belongs to the bacterial ribosomal protein bL27 family.

The polypeptide is Large ribosomal subunit protein bL27 (Rickettsia bellii (strain RML369-C)).